The following is a 729-amino-acid chain: Capsid protein VP1 (729 aa).

Residues 1–10 (MAPPAKRAKR) are compositionally biased toward basic residues. Disordered stretches follow at residues 1 to 38 (MAPP…SDAA), 96 to 115 (LATD…KRTR), and 130 to 185 (KLTS…VGVS). Positions 4-13 (PAKRAKRGWV) match the Nuclear localization signal motif. Residues 19–64 (YLGPGNSLDQGEPTNPSDAAAKEHDEAYDQYIKSGKNPYLYFSAAD) are phospholipase A2-like. Residues 25-35 (SLDQGEPTNPS) show a composition bias toward polar residues. Over residues 132–142 (TSSAAQQSSQT) the composition is skewed to low complexity. The span at 143–152 (MSDGTSQPDS) shows a compositional bias: polar residues. A compositionally biased stretch (gly residues) spans 168 to 184 (GPGGSGGGGSGGGGVGV). Position 325 (Asn325) interacts with Mg(2+).

This sequence belongs to the parvoviridae capsid protein family.

It is found in the virion. The protein localises to the host nucleus. Functionally, capsid protein self-assembles to form an icosahedral capsid with a T=1 symmetry, about 22 nm in diameter, and consisting of 60 copies of two size variants of the capsid proteins, VP1 and VP2, which differ by the presence of an N-terminal extension in the minor protein VP1. The capsid encapsulates the genomic ssDNA. Capsid proteins are responsible for the attachment to host cell receptors. This attachment induces virion internalization predominantly through clathrin-dependent endocytosis. Binding to the host receptors also induces capsid rearrangements leading to surface exposure of VP1 N-terminus, specifically its phospholipase A2-like region and putative nuclear localization signal(s). VP1 N-terminus might serve as a lipolytic enzyme to breach the endosomal membrane during entry into host cell and might contribute to virus transport to the nucleus. This chain is Capsid protein VP1, found in Mus musculus (Mouse).